Reading from the N-terminus, the 360-residue chain is Archaemetzincin-2 (360 aa).

H254 contributes to the Zn(2+) binding site. E255 functions as the Proton acceptor in the catalytic mechanism. Zn(2+)-binding residues include H258, H264, C265, C270, C289, and C292.

Belongs to the peptidase M54 family. Zn(2+) serves as cofactor. Down-regulated in testis from patients with maturation arrest (MA) or Sertoli cell-only syndrome (SCOS).

In terms of biological role, probable zinc metalloprotease. The chain is Archaemetzincin-2 (AMZ2) from Homo sapiens (Human).